Here is a 260-residue protein sequence, read N- to C-terminus: Ribonuclease HII (260 aa).

In terms of domain architecture, RNase H type-2 spans 71 to 259 (RRIAGIDEAG…VREVLKASEQ (189 aa)). 3 residues coordinate a divalent metal cation: Asp-77, Glu-78, and Asp-169.

It belongs to the RNase HII family. The cofactor is Mn(2+). It depends on Mg(2+) as a cofactor.

The protein localises to the cytoplasm. It catalyses the reaction Endonucleolytic cleavage to 5'-phosphomonoester.. Its function is as follows. Endonuclease that specifically degrades the RNA of RNA-DNA hybrids. This is Ribonuclease HII from Geobacillus kaustophilus (strain HTA426).